An 89-amino-acid polypeptide reads, in one-letter code: Small ribosomal subunit protein uS15 (89 aa).

Belongs to the universal ribosomal protein uS15 family. In terms of assembly, part of the 30S ribosomal subunit. Forms a bridge to the 50S subunit in the 70S ribosome, contacting the 23S rRNA.

Functionally, one of the primary rRNA binding proteins, it binds directly to 16S rRNA where it helps nucleate assembly of the platform of the 30S subunit by binding and bridging several RNA helices of the 16S rRNA. In terms of biological role, forms an intersubunit bridge (bridge B4) with the 23S rRNA of the 50S subunit in the ribosome. In Acinetobacter baylyi (strain ATCC 33305 / BD413 / ADP1), this protein is Small ribosomal subunit protein uS15.